The primary structure comprises 131 residues: Large ribosomal subunit protein bL17 (131 aa).

This sequence belongs to the bacterial ribosomal protein bL17 family. Part of the 50S ribosomal subunit. Contacts protein L32.

This Hamiltonella defensa subsp. Acyrthosiphon pisum (strain 5AT) protein is Large ribosomal subunit protein bL17.